The primary structure comprises 872 residues: DNA mismatch repair protein MutS (872 aa).

Glycine 602 to serine 609 is a binding site for ATP.

Belongs to the DNA mismatch repair MutS family.

Its function is as follows. This protein is involved in the repair of mismatches in DNA. It is possible that it carries out the mismatch recognition step. This protein has a weak ATPase activity. The chain is DNA mismatch repair protein MutS from Staphylococcus aureus (strain MRSA252).